Consider the following 133-residue polypeptide: Ribonuclease P protein component (133 aa).

This sequence belongs to the RnpA family. As to quaternary structure, consists of a catalytic RNA component (M1 or rnpB) and a protein subunit.

The enzyme catalyses Endonucleolytic cleavage of RNA, removing 5'-extranucleotides from tRNA precursor.. RNaseP catalyzes the removal of the 5'-leader sequence from pre-tRNA to produce the mature 5'-terminus. It can also cleave other RNA substrates such as 4.5S RNA. The protein component plays an auxiliary but essential role in vivo by binding to the 5'-leader sequence and broadening the substrate specificity of the ribozyme. In Paramagnetospirillum magneticum (strain ATCC 700264 / AMB-1) (Magnetospirillum magneticum), this protein is Ribonuclease P protein component.